A 1299-amino-acid polypeptide reads, in one-letter code: MAAETQTLNFGPEWLRALSSGGSITSPPLSPALPKYKLADYRYGREEMLALFLKDNKIPSDLLDKEFLPILQEEPLPPLALVPFTEEEQRNFSMSVNSAAVLRLTGRGGGGTVVGAPRGRSSSRGRGRGRGECGFYQRSFDEVEGVFGRGGGREMHRSQSWEERGDRRFEKPGRKDVGRPNFEEGGPTSVGRKHEFIRSESENWRIFREEQNGEDEDGGWRLAGSRRDGERWRPHSPDGPRSAGWREHMERRRRFEFDFRDRDDERGYRRVRSGSGSIDDDRDSLPEWCLEDAEEEMGTFDSSGAFLSLKKVQKEPIPEEQEMDFRPVDEGEECSDSEGSHNEEAKEPDKTNKKEGEKTDRVGVEASEETPQTSSSSARPGTPSDHQSQEASQFERKDEPKTEQTEKAEEETRMENSLPAKVPSRGDEMVADVQQPLSQIPSDTASPLLILPPPVPNPSPTLRPVETPVVGAPGMGSVSTEPDDEEGLKHLEQQAEKMVAYLQDSALDDERLASKLQEHRAKGVSIPLMHEAMQKWYYKDPQGEIQGPFNNQEMAEWFQAGYFTMSLLVKRACDESFQPLGDIMKMWGRVPFSPGPAPPPHMGELDQERLTRQQELTALYQMQHLQYQQFLIQQQYAQVLAQQQKAALSSQQQQQLALLLQQFQTLKMRISDQNIIPSVTRSVSVPDTGSIWELQPTASQPTVWEGGSVWDLPLDTTTPGPALEQLQQLEKAKAAKLEQERREAEMRAKREEEERKRQEELRRQQEEILRRQQEEERKRREEEELARRKQEEALRRQREQEIALRRQREEEERQQQEEALRRLEERRREEEERRKQEELLRKQEEEAAKWAREEEEAQRRLEENRLRMEEEAARLRHEEEERKRKELEVQRQKELMRQRQQQQEALRRLQQQQQQQQLAQMKLPSSSTWGQQSNTTACQSQATLSLAEIQKLEEERERQLREEQRRQQRELMKALQQQQQQQQQKLSGWGNVSKPSGTTKSLLEIQQEEARQMQKQQQQQQQHQQPNRARNNTHSNLHTSIGNSVWGSINTGPPNQWASDLVSSIWSNADTKNSNMGFWDDAVKEVGPRNSTNKNKNNASLSKSVGVSNRQNKKVEEEEKLLKLFQGVNKAQDGFTQWCEQMLHALNTANNLDVPTFVSFLKEVESPYEVHDYIRAYLGDTSEAKEFAKQFLERRAKQKANQQRQQQQLPQQQQQQPPQQPPQQPQQQDSVWGMNHSTLHSVFQTNQSNNQQSNFEAVQSGKKKKKQKMVRADPSLLGFSVNASSERLNMGEIETLDDY.

At A2 the chain carries N-acetylalanine. A phosphoserine mark is found at S19, S26, and S30. The short motif at 40 to 50 is the 4EHP-binding motif element; the sequence is DYRYGREEMLA. Omega-N-methylarginine occurs at positions 107, 118, and 120. Residues 112–131 are disordered; that stretch reads TVVGAPRGRSSSRGRGRGRG. Phosphoserine is present on S139. Disordered stretches follow at residues 147-195, 214-247, and 266-433; these read FGRG…RKHE, EDEDGGWRLAGSRRDGERWRPHSPDGPRSAGWRE, and RGYR…VADV. The residue at position 149 (R149) is an Omega-N-methylarginine. Positions 151–182 are enriched in basic and acidic residues; sequence GGREMHRSQSWEERGDRRFEKPGRKDVGRPNF. Residues S160, S189, and S236 each carry the phosphoserine modification. The span at 225 to 247 shows a compositional bias: basic and acidic residues; it reads SRRDGERWRPHSPDGPRSAGWRE. The DDX6 binding motif signature appears at 280–310; the sequence is DDRDSLPEWCLEDAEEEMGTFDSSGAFLSLK. The segment covering 289–298 has biased composition (acidic residues); the sequence is CLEDAEEEMG. 2 stretches are compositionally biased toward basic and acidic residues: residues 312 to 329 and 338 to 363; these read VQKEPIPEEQEMDFRPVD and EGSHNEEAKEPDKTNKKEGEKTDRVG. Residues 369-392 are compositionally biased toward polar residues; the sequence is ETPQTSSSSARPGTPSDHQSQEAS. Position 382 is a phosphothreonine (T382). S388 bears the Phosphoserine mark. Over residues 393–414 the composition is skewed to basic and acidic residues; it reads QFERKDEPKTEQTEKAEEETRM. One can recognise a GYF domain in the interval 533 to 581; it reads MQKWYYKDPQGEIQGPFNNQEMAEWFQAGYFTMSLLVKRACDESFQPLG. A required for GRB10-binding region spans residues 547-563; the sequence is GPFNNQEMAEWFQAGYF. S593 carries the phosphoserine modification. Disordered stretches follow at residues 733–793, 845–866, 872–891, 917–936, 957–997, 1009–1048, and 1084–1112; these read KAAK…QEEA, EEAAKWAREEEEAQRRLEENRL, AARLRHEEEERKRKELEVQR, QLAQMKLPSSSTWGQQSNTT, ERQL…KPSG, EARQMQKQQQQQQQHQQPNRARNNTHSNLHTSIGNSVWGS, and KEVGPRNSTNKNKNNASLSKSVGVSNRQN. The tract at residues 860 to 919 is required for interaction with SARS-CoV-2 non-structural protein 2 (nsp2); the sequence is RLEENRLRMEEEAARLRHEEEERKRKELEVQRQKELMRQRQQQQEALRRLQQQQQQQQLA. Over residues 924-936 the composition is skewed to polar residues; the sequence is PSSSTWGQQSNTT. Positions 957 to 972 are enriched in basic and acidic residues; that stretch reads ERQLREEQRRQQRELM. Residue S993 is modified to Phosphoserine. Residues 1013-1025 are compositionally biased toward low complexity; that stretch reads MQKQQQQQQQHQQ. Residues 1026-1048 show a composition bias toward polar residues; the sequence is PNRARNNTHSNLHTSIGNSVWGS. Residues 1090–1104 are compositionally biased toward low complexity; the sequence is NSTNKNKNNASLSKS. Residue K1123 forms a Glycyl lysine isopeptide (Lys-Gly) (interchain with G-Cter in SUMO2) linkage. Disordered stretches follow at residues 1195 to 1230 and 1247 to 1271; these read RAKQKANQQRQQQQLPQQQQQQPPQQPPQQPQQQDS and QSNNQQSNFEAVQSGKKKKKQKMVR. A compositionally biased stretch (low complexity) spans 1202–1217; the sequence is QQRQQQQLPQQQQQQP. S1284 is modified (phosphoserine).

Belongs to the GIGYF family. As to quaternary structure, component of the 4EHP-GYF2 complex, at least composed of EIF4E2, GIGYF2 and ZNF598. Interacts (via the 4EHP-binding motif) with EIF4E2; the interaction is direct. Interacts with ZFP36/TTP (via P-P-P-P-G repeats); the interaction is direct. Interacts with GRB10. Interacts (via DDX6 motif) with DDX6 (via RecA-like domain 2). In terms of assembly, (Microbial infection) Interacts with SARS coronavirus-2/SARS-CoV-2 non-structural protein 2 (nsp2); the interaction enhances GIGYF2 binding to EIF4E2.

Key component of the 4EHP-GYF2 complex, a multiprotein complex that acts as a repressor of translation initiation. In the 4EHP-GYF2 complex, acts as a factor that bridges EIF4E2 to ZFP36/TTP, linking translation repression with mRNA decay. Also recruits and bridges the association of the 4EHP complex with the decapping effector protein DDX6, which is required for the ZFP36/TTP-mediated down-regulation of AU-rich mRNA. May act cooperatively with GRB10 to regulate tyrosine kinase receptor signaling, including IGF1 and insulin receptors. In association with EIF4E2, assists ribosome-associated quality control (RQC) by sequestering the mRNA cap, blocking ribosome initiation and decreasing the translational load on problematic messages. Part of a pathway that works in parallel to RQC-mediated degradation of the stalled nascent polypeptide. GIGYF2 and EIF4E2 work downstream and independently of ZNF598, which seems to work as a scaffold that can recruit them to faulty mRNA even if alternative recruitment mechanisms may exist. Functionally, (Microbial infection) Upon SARS coronavirus-2/SARS-CoV-2 infection, the interaction with non-structural protein 2 (nsp2) enhances GIGYF2 binding to EIF4E2 and increases repression of translation initiation of genes involved in antiviral innate immune response such as IFNB1. The sequence is that of GRB10-interacting GYF protein 2 from Homo sapiens (Human).